The sequence spans 200 residues: Probable DNA-directed RNA polymerase subunit delta (200 aa).

An HTH HARE-type domain is found at leucine 19 to tryptophan 88. 2 stretches are compositionally biased toward acidic residues: residues aspartate 125–glutamate 143 and tyrosine 150–glutamate 200. Residues aspartate 125–glutamate 200 form a disordered region.

It belongs to the RpoE family. As to quaternary structure, RNAP is composed of a core of 2 alpha, a beta and a beta' subunits. The core is associated with a delta subunit and one of several sigma factors.

In terms of biological role, participates in both the initiation and recycling phases of transcription. In the presence of the delta subunit, RNAP displays an increased specificity of transcription, a decreased affinity for nucleic acids, and an increased efficiency of RNA synthesis because of enhanced recycling. The sequence is that of Probable DNA-directed RNA polymerase subunit delta from Streptococcus pneumoniae serotype 4 (strain ATCC BAA-334 / TIGR4).